The sequence spans 711 residues: Polyribonucleotide nucleotidyltransferase (711 aa).

Mg(2+) contacts are provided by D486 and D492. The KH domain maps to 553–612 (PRIHTIKISTDKIKDVIGKGGSVIRALTEETGTTIEIEDDGTVKIAATDGEKAKYAIRRI). The 69-residue stretch at 622 to 690 (GRIYNGKVTR…RQGRVRLSIK (69 aa)) folds into the S1 motif domain. The disordered stretch occupies residues 689 to 711 (IKEATEQTQPAAAPEAPTSEQGE). The span at 694–711 (EQTQPAAAPEAPTSEQGE) shows a compositional bias: low complexity.

This sequence belongs to the polyribonucleotide nucleotidyltransferase family. In terms of assembly, component of the RNA degradosome, which is a multiprotein complex involved in RNA processing and mRNA degradation. It depends on Mg(2+) as a cofactor.

The protein resides in the cytoplasm. It carries out the reaction RNA(n+1) + phosphate = RNA(n) + a ribonucleoside 5'-diphosphate. In terms of biological role, involved in mRNA degradation. Catalyzes the phosphorolysis of single-stranded polyribonucleotides processively in the 3'- to 5'-direction. The protein is Polyribonucleotide nucleotidyltransferase of Salmonella arizonae (strain ATCC BAA-731 / CDC346-86 / RSK2980).